The chain runs to 249 residues: Selenoprotein BthD (249 aa).

Residues 1–22 (MPPKRNKKAEAPIAERDAGEEL) are disordered. Residues 8–19 (KAEAPIAERDAG) are compositionally biased toward basic and acidic residues. A cross-link (cysteinyl-selenocysteine (Cys-Sec); redox-active) is located at residues 34 to 37 (CRSU). Position 37 (Sec-37) is a non-standard amino acid, selenocysteine. Positions 122–249 (QQESKEQTNT…EATAGAKRRR (128 aa)) are disordered. Ser-147 carries the post-translational modification Phosphoserine. Positions 175–198 (EQKSEEEPTQVDSKEAKQSKELVK) are enriched in basic and acidic residues. A compositionally biased stretch (basic residues) spans 199-210 (TKRQPKAQKKQA).

As to expression, expressed in the developing salivary gland at late stages of embryogenesis. Also expressed in brain, neuroblast and wing disk.

It localises to the cytoplasm. It is found in the secreted. Its function is as follows. May be involved in a redox-related process. Required for survival and specifically for salivary gland morphogenesis. This Drosophila melanogaster (Fruit fly) protein is Selenoprotein BthD (BthD).